Reading from the N-terminus, the 153-residue chain is Penitrem biosynthesis cluster 1 protein I (153 aa).

Its pathway is secondary metabolite biosynthesis. Its function is as follows. Part of the gene cluster that mediates the biosynthesis of the indole diterpenes penitrems. The geranylgeranyl diphosphate (GGPP) synthase ptmG catalyzes the first step in penitrem biosynthesis via conversion of farnesyl pyrophosphate and isopentyl pyrophosphate into geranylgeranyl pyrophosphate (GGPP). Condensation of indole-3-glycerol phosphate with GGPP by the prenyl transferase ptmC then forms 3-geranylgeranylindole (3-GGI). Epoxidation by the FAD-dependent monooxygenase ptmM leads to a epoxidized-GGI that is substrate of the terpene cyclase ptmB for cyclization to yield paspaline. Paspaline is subsequently converted to 13-desoxypaxilline by the cytochrome P450 monooxygenase ptmP, the latter being then converted to paxilline by the cytochrome P450 monooxygenase ptmQ. Paxilline is converted to beta-paxitriol via C-10 ketoreduction by the short-chain dehydrogenase ptmH which can be monoprenylated at the C-20 by the indole diterpene prenyltransferase ptmD. A two-step elimination (acetylation and elimination) process performed by the O-acetyltransferase ptmV and ptmI leads to the production of the prenylated form of penijanthine. The FAD-linked oxidoreductase ptmO then converts the prenylated form of penijanthine into PC-M5 which is in turn transformed into PC-M4 by the aromatic dimethylallyltransferase ptmE. Five sequential oxidative transformations performed by the cytochrome P450 monooxygenases ptmK, ptmU, ptmL, ptmN and ptmJ yield the various penitrem compounds. PtmK, ptmU and ptmM are involved in the formation of the key bicyclic ring of penitrem C via the formation of the intermediates secopenitrem D and penitrem D. PtmL catalyzes the epoxidation of penitrem D and C to yield penitrem B and F, respectively. PtmJ catalyzes the last benzylic hydroxylation to convert penitrem B to prenitrem E and penitrem F to penitrem A. In Penicillium ochrochloron, this protein is Penitrem biosynthesis cluster 1 protein I.